A 149-amino-acid polypeptide reads, in one-letter code: Arginine repressor (149 aa).

This sequence belongs to the ArgR family.

The protein resides in the cytoplasm. Its pathway is amino-acid biosynthesis; L-arginine biosynthesis [regulation]. Functionally, regulates arginine biosynthesis genes. This Geobacillus sp. (strain WCH70) protein is Arginine repressor.